A 102-amino-acid chain; its full sequence is Putative RNA-binding protein RbpA (102 aa).

Positions 2 to 79 constitute an RRM domain; that stretch reads SIYVGNLSYE…RDLKVNKAKP (78 aa). Over residues 73-84 the composition is skewed to basic and acidic residues; the sequence is KVNKAKPREDRG. A disordered region spans residues 73–102; sequence KVNKAKPREDRGPSGGNRGGYGGGGGRNRY. A compositionally biased stretch (gly residues) spans 85–102; the sequence is PSGGNRGGYGGGGGRNRY.

The polypeptide is Putative RNA-binding protein RbpA (rbpA) (Nostoc sp. (strain PCC 7120 / SAG 25.82 / UTEX 2576)).